The following is a 146-amino-acid chain: Urease accessory protein UreE 1 (146 aa).

This sequence belongs to the UreE family.

The protein resides in the cytoplasm. Its function is as follows. Involved in urease metallocenter assembly. Binds nickel. Probably functions as a nickel donor during metallocenter assembly. This Pseudomonas syringae pv. syringae (strain B728a) protein is Urease accessory protein UreE 1.